The chain runs to 447 residues: GTPase Der (447 aa).

2 consecutive EngA-type G domains span residues 3–167 (PVIA…FAQR) and 181–354 (IRLA…AAAM). GTP-binding positions include 9–16 (GRPNVGKS), 56–60 (DTGGF), 119–122 (NKAE), 187–194 (GRPNVGKS), 234–238 (DTAGI), and 299–302 (NKWD). The KH-like domain maps to 355–439 (SNLSTPKLTR…PLRIELRSGK (85 aa)).

Belongs to the TRAFAC class TrmE-Era-EngA-EngB-Septin-like GTPase superfamily. EngA (Der) GTPase family. As to quaternary structure, associates with the 50S ribosomal subunit.

Its function is as follows. GTPase that plays an essential role in the late steps of ribosome biogenesis. The polypeptide is GTPase Der (Herminiimonas arsenicoxydans).